Consider the following 93-residue polypeptide: Phosphoribosyl-ATP pyrophosphatase (93 aa).

This sequence belongs to the PRA-PH family.

It is found in the cytoplasm. The catalysed reaction is 1-(5-phospho-beta-D-ribosyl)-ATP + H2O = 1-(5-phospho-beta-D-ribosyl)-5'-AMP + diphosphate + H(+). It functions in the pathway amino-acid biosynthesis; L-histidine biosynthesis; L-histidine from 5-phospho-alpha-D-ribose 1-diphosphate: step 2/9. This Rhodococcus erythropolis (strain PR4 / NBRC 100887) protein is Phosphoribosyl-ATP pyrophosphatase.